The following is a 397-amino-acid chain: CCA-adding enzyme (397 aa).

The ATP site is built by Gly26 and Arg29. The CTP site is built by Gly26 and Arg29. Residues Asp39 and Asp41 each coordinate Mg(2+). 5 residues coordinate ATP: Arg110, Asp153, Arg156, Arg159, and Arg162. CTP-binding residues include Arg110, Asp153, Arg156, Arg159, and Arg162.

Belongs to the tRNA nucleotidyltransferase/poly(A) polymerase family. Bacterial CCA-adding enzyme type 3 subfamily. Homodimer. It depends on Mg(2+) as a cofactor.

It carries out the reaction a tRNA precursor + 2 CTP + ATP = a tRNA with a 3' CCA end + 3 diphosphate. It catalyses the reaction a tRNA with a 3' CCA end + 2 CTP + ATP = a tRNA with a 3' CCACCA end + 3 diphosphate. Catalyzes the addition and repair of the essential 3'-terminal CCA sequence in tRNAs without using a nucleic acid template. Adds these three nucleotides in the order of C, C, and A to the tRNA nucleotide-73, using CTP and ATP as substrates and producing inorganic pyrophosphate. tRNA 3'-terminal CCA addition is required both for tRNA processing and repair. Also involved in tRNA surveillance by mediating tandem CCA addition to generate a CCACCA at the 3' terminus of unstable tRNAs. While stable tRNAs receive only 3'-terminal CCA, unstable tRNAs are marked with CCACCA and rapidly degraded. The sequence is that of CCA-adding enzyme from Bacillus cereus (strain AH187).